The following is a 108-amino-acid chain: UPF0145 protein LGAS_1099 (108 aa).

It belongs to the UPF0145 family.

This chain is UPF0145 protein LGAS_1099, found in Lactobacillus gasseri (strain ATCC 33323 / DSM 20243 / BCRC 14619 / CIP 102991 / JCM 1131 / KCTC 3163 / NCIMB 11718 / NCTC 13722 / AM63).